Reading from the N-terminus, the 400-residue chain is Protein screw (400 aa).

Residues 1–16 (MLNVFFLTSLFYAASA) form the signal peptide. The propeptide occupies 17 to 277 (TTYVTTNNHI…RFKRDLEKRR (261 aa)). N-linked (GlcNAc...) asparagine glycosylation is found at asparagine 165, asparagine 189, asparagine 201, asparagine 304, and asparagine 342. Intrachain disulfides connect cysteine 300–cysteine 365, cysteine 329–cysteine 397, and cysteine 333–cysteine 399.

The protein belongs to the TGF-beta family. In terms of assembly, heterodimers of scw/dpp are the active subunit, dpp/dpp homodimers elicit a basal response and scw/scw homodimers alone are ineffective in specifying a dorsal pattern. As to expression, ubiquitously expressed during early stages of embryogenesis, but the effect on development appears graded and is restricted to the dorsal side of the embryo.

It is found in the secreted. Functionally, part of the signal that specifies dorsal cell fates in the embryo. Acts together with dpp. The chain is Protein screw (scw) from Drosophila melanogaster (Fruit fly).